The sequence spans 428 residues: Bifunctional IPC transferase and DIPP synthase (428 aa).

Positions 2–227 are mobA-like NTP transferase; the sequence is VETAVILAGG…KAKKYLVKTA (226 aa). CTP-binding positions include 8-10, K25, E80, and E116; that span reads LAG. Mg(2+) is bound at residue E116. The tract at residues 228–425 is CDP-alcohol phosphatidyltransferases; the sequence is IKGVGDGFIS…LTIYLVWKKK (198 aa). The next 3 membrane-spanning stretches (helical) occupy residues 266–286, 336–356, and 389–409; these read FLLG…GGIL, PSWD…MVSY, and MIMI…LAII.

It in the N-terminal section; belongs to the MobA family. In the C-terminal section; belongs to the CDP-alcohol phosphatidyltransferase class-I family. The cofactor is Mg(2+).

The protein resides in the membrane. The catalysed reaction is 1D-myo-inositol 3-phosphate + CTP + H(+) = CDP-1L-myo-inositol + diphosphate. The enzyme catalyses CDP-1L-myo-inositol + 1D-myo-inositol 3-phosphate = bis(1L-myo-inositol) 3,1'-phosphate 1-phosphate + CMP + H(+). Its function is as follows. Involved in biosynthesis of di-myo-inositol phosphate (DIP), a widespread organic solute in microorganisms adapted to hot environments. Catalyzes the condensation of CTP and L-myo-inositol-1-phosphate into CDP-L-myo-inositol, as well as the biosynthesis of di-myo-inositol-1,3'-phosphate-1'-phosphate (DIPP) from CDP-L-myo-inositol and L-myo-inositol-1-phosphate. The sequence is that of Bifunctional IPC transferase and DIPP synthase (spsI) from Aquifex aeolicus (strain VF5).